The sequence spans 296 residues: Bifunctional protein FolD (296 aa).

NADP(+) is bound by residues 168–170 (GRS), serine 197, and threonine 238.

The protein belongs to the tetrahydrofolate dehydrogenase/cyclohydrolase family. As to quaternary structure, homodimer.

It carries out the reaction (6R)-5,10-methylene-5,6,7,8-tetrahydrofolate + NADP(+) = (6R)-5,10-methenyltetrahydrofolate + NADPH. The catalysed reaction is (6R)-5,10-methenyltetrahydrofolate + H2O = (6R)-10-formyltetrahydrofolate + H(+). It functions in the pathway one-carbon metabolism; tetrahydrofolate interconversion. Its function is as follows. Catalyzes the oxidation of 5,10-methylenetetrahydrofolate to 5,10-methenyltetrahydrofolate and then the hydrolysis of 5,10-methenyltetrahydrofolate to 10-formyltetrahydrofolate. In Porphyromonas gingivalis (strain ATCC BAA-308 / W83), this protein is Bifunctional protein FolD.